Consider the following 446-residue polypeptide: Exodeoxyribonuclease 7 large subunit (446 aa).

It belongs to the XseA family. In terms of assembly, heterooligomer composed of large and small subunits.

The protein localises to the cytoplasm. The enzyme catalyses Exonucleolytic cleavage in either 5'- to 3'- or 3'- to 5'-direction to yield nucleoside 5'-phosphates.. Functionally, bidirectionally degrades single-stranded DNA into large acid-insoluble oligonucleotides, which are then degraded further into small acid-soluble oligonucleotides. In Streptococcus pneumoniae (strain ATCC BAA-255 / R6), this protein is Exodeoxyribonuclease 7 large subunit.